Consider the following 344-residue polypeptide: Selenide, water dikinase (344 aa).

Cysteine 16 is an active-site residue. ATP contacts are provided by residues lysine 19 and serine 47–aspartate 49. Residue aspartate 50 participates in Mg(2+) binding. ATP-binding positions include aspartate 67, aspartate 90, and glycine 138–serine 140. Aspartate 90 is a Mg(2+) binding site. Mg(2+) is bound at residue aspartate 226.

It belongs to the selenophosphate synthase 1 family. Class I subfamily. As to quaternary structure, homodimer. It depends on Mg(2+) as a cofactor.

It catalyses the reaction hydrogenselenide + ATP + H2O = selenophosphate + AMP + phosphate + 2 H(+). Synthesizes selenophosphate from selenide and ATP. The sequence is that of Selenide, water dikinase from Bordetella bronchiseptica (strain ATCC BAA-588 / NCTC 13252 / RB50) (Alcaligenes bronchisepticus).